The chain runs to 431 residues: MPNPRPGKPSAPSLALGPSPGASPSWRAAPKASDLLGARGPGGTFQGRDLRGGAHASSSSLNPMPPSQLQLPTLPLVMVAPSGARLGPLPHLQALLQDRPHFMHQLSTVDAHARTPVLQVHPLESPAMISLTPPTTATGVFSLKARPGLPPGINVASLEWVSREPALLCTFPNPSAPRKDSTLSAVPQSSYPLLANGVCKWPGCEKVFEEPEDFLKHCQADHLLDEKGRAQCLLQREMVQSLEQQLVLEKEKLSAMQAHLAGKMALTKASSVASSDKGSCCIVAAGSQGPVVPAWSGPREAPDSLFAVRRHLWGSHGNSTFPEFLHNMDYFKFHNMRPPFTYATLIRWAILEAPEKQRTLNEIYHWFTRMFAFFRNHPATWKNAIRHNLSLHKCFVRVESEKGAVWTVDELEFRKKRSQRPSRCSNPTPGP.

The segment at 1 to 68 (MPNPRPGKPS…SSLNPMPPSQ (68 aa)) is disordered. Residues 10–25 (SAPSLALGPSPGASPS) show a composition bias toward low complexity. S19 is modified (phosphoserine; by CDK2). K31 carries the N6-acetyllysine modification. A Nuclear export signal motif is present at residues 68-76 (QLQLPTLPL). The short motif at 92–96 (LQALL) is the LXXLL motif element. The tract at residues 106-190 (LSTVDAHART…STLSAVPQSS (85 aa)) is essential for transcriptional repressor activity and for interaction with KAT5 and HDAC7. Positions 106–198 (LSTVDAHART…SSYPLLANGV (93 aa)) are interaction with ZFP90. The tract at residues 149 to 199 (LPPGINVASLEWVSREPALLCTFPNPSAPRKDSTLSAVPQSSYPLLANGVC) is interaction with IKZF4. The segment at 197-222 (GVCKWPGCEKVFEEPEDFLKHCQADH) adopts a C2H2-type zinc-finger fold. Positions 239–248 (VQSLEQQLVL) match the Nuclear export signal motif. The segment at 239–260 (VQSLEQQLVLEKEKLSAMQAHL) is leucine-zipper. Residues K250 and K252 each participate in a glycyl lysine isopeptide (Lys-Gly) (interchain with G-Cter in ubiquitin) cross-link. 2 positions are modified to N6-acetyllysine; alternate: K263 and K268. Residues K263 and K268 each participate in a glycyl lysine isopeptide (Lys-Gly) (interchain with G-Cter in ubiquitin); alternate cross-link. An interaction with RUNX1 region spans residues 278 to 336 (GSCCIVAAGSQGPVVPAWSGPREAPDSLFAVRRHLWGSHGNSTFPEFLHNMDYFKFHNM). A DNA-binding region (fork-head) is located at residues 337-423 (RPPFTYATLI…RKKRSQRPSR (87 aa)). Residue K393 forms a Glycyl lysine isopeptide (Lys-Gly) (interchain with G-Cter in ubiquitin) linkage. A Nuclear localization signal motif is present at residues 414 to 417 (RKKR). Phosphoserine is present on S418. Positions 418 to 431 (SQRPSRCSNPTPGP) are excised as a propeptide.

As to quaternary structure, homodimer. Dimerization is essential for its transcriptional regulator activity. Interacts with IKZF3. Isoform 1 (via LXXLL motif), but not isoform 2, interacts with isoform 4 of RORA (via AF-2 motif). Interacts with STUB1, HSPA8 and HSPA1A/B. Interacts with PPP1CA, PPP1CB and PPP1CG. Interacts with KAT5 and HDAC7. Interacts with HDAC9 in the absence of T-cell stimulation. Interacts with USP7. Interacts with isoform 2 of ZFP90 and can form a complex with TRIM28 in the presence of isoform 2 of ZFP90. Interacts with RUNX1. Interacts with RORC. Interacts with RELA and NFATC2. Interacts with RUNX2, RUNX3 and IKZF4. Post-translationally, polyubiquitinated, leading to its proteasomal degradation in regulatory T-cells (Treg) which is mediated by STUB1 in a HSPA1A/B-dependent manner. Deubiquitinated by USP7 and USP44; leading to increase in protein stability. Phosphorylation at Ser-418 regulates its transcriptional repressor activity and consequently, regulatory T-cells (Treg) suppressive function. Dephosphorylated at Ser-418 by protein phosphatase 1 (PP1) in Treg cells derived from patients with rheumatoid arthritis. Phosphorylation by CDK2 negatively regulates its transcriptional activity and protein stability. In terms of processing, acetylation on lysine residues stabilizes FOXP3 and promotes differentiation of T-cells into induced regulatory T-cells (iTregs) associated with suppressive functions. Acetylation is mediated by a coordinated action of KAT5 and EP300/p300 acetyltransferases: EP300/p300 is required to enhance KAT5 autoacetylation, promoting acetylation of FOXP3 by KAT5. Deacetylated by SIRT1. Post-translationally, undergoes proteolytic cleavage in activated regulatory T-cells (Treg), and can be cleaved at either the N- or C-terminal site, or at both sites.

Its subcellular location is the nucleus. It is found in the cytoplasm. Transcriptional regulator which is crucial for the development and inhibitory function of regulatory T-cells (Treg). Plays an essential role in maintaining homeostasis of the immune system by allowing the acquisition of full suppressive function and stability of the Treg lineage, and by directly modulating the expansion and function of conventional T-cells. Can act either as a transcriptional repressor or a transcriptional activator depending on its interactions with other transcription factors, histone acetylases and deacetylases. The suppressive activity of Treg involves the coordinate activation of many genes, including CTLA4 and TNFRSF18 by FOXP3 along with repression of genes encoding cytokines such as interleukin-2 (IL2) and interferon-gamma (IFNG). Inhibits cytokine production and T-cell effector function by repressing the activity of two key transcription factors, RELA and NFATC2. Mediates transcriptional repression of IL2 via its association with histone acetylase KAT5 and histone deacetylase HDAC7. Can activate the expression of TNFRSF18, IL2RA and CTLA4 and repress the expression of IL2 and IFNG via its association with transcription factor RUNX1. Inhibits the differentiation of IL17 producing helper T-cells (Th17) by antagonizing RORC function, leading to down-regulation of IL17 expression, favoring Treg development. Inhibits the transcriptional activator activity of RORA. Can repress the expression of IL2 and IFNG via its association with transcription factor IKZF4. The chain is Forkhead box protein P3 (FOXP3) from Homo sapiens (Human).